Here is a 393-residue protein sequence, read N- to C-terminus: Carbamoyl phosphate synthase small chain (393 aa).

The segment at 1 to 194 is CPSase; the sequence is MSKDTTTYQG…TYVIEAEGEE (194 aa). 3 residues coordinate L-glutamine: serine 61, glycine 245, and glycine 247. The Glutamine amidotransferase type-1 domain occupies 195–390; the sequence is RHTVVAYDLG…VELMDADAQK (196 aa). Cysteine 273 serves as the catalytic Nucleophile. L-glutamine-binding residues include phenylalanine 274, glutamine 277, asparagine 315, glycine 317, and phenylalanine 318. Catalysis depends on residues histidine 363 and glutamate 365.

Belongs to the CarA family. In terms of assembly, composed of two chains; the small (or glutamine) chain promotes the hydrolysis of glutamine to ammonia, which is used by the large (or ammonia) chain to synthesize carbamoyl phosphate. Tetramer of heterodimers (alpha,beta)4.

It catalyses the reaction hydrogencarbonate + L-glutamine + 2 ATP + H2O = carbamoyl phosphate + L-glutamate + 2 ADP + phosphate + 2 H(+). It carries out the reaction L-glutamine + H2O = L-glutamate + NH4(+). Its pathway is amino-acid biosynthesis; L-arginine biosynthesis; carbamoyl phosphate from bicarbonate: step 1/1. It participates in pyrimidine metabolism; UMP biosynthesis via de novo pathway; (S)-dihydroorotate from bicarbonate: step 1/3. Functionally, small subunit of the glutamine-dependent carbamoyl phosphate synthetase (CPSase). CPSase catalyzes the formation of carbamoyl phosphate from the ammonia moiety of glutamine, carbonate, and phosphate donated by ATP, constituting the first step of 2 biosynthetic pathways, one leading to arginine and/or urea and the other to pyrimidine nucleotides. The small subunit (glutamine amidotransferase) binds and cleaves glutamine to supply the large subunit with the substrate ammonia. The chain is Carbamoyl phosphate synthase small chain from Corynebacterium glutamicum (strain ATCC 13032 / DSM 20300 / JCM 1318 / BCRC 11384 / CCUG 27702 / LMG 3730 / NBRC 12168 / NCIMB 10025 / NRRL B-2784 / 534).